Consider the following 124-residue polypeptide: MATTNQLIRKGRTTLVEKSKVPALKACPQRRGVCTRVYTTTPKKPNSAMRKVCRVRLTSGFEVSSYIGGEGHNLQEHSVVLIRGGRVKDLPGVRYHTVRGSLDCAGVKDRNQSRSKYGAKRPKK.

3-methylthioaspartic acid is present on D89.

It belongs to the universal ribosomal protein uS12 family. In terms of assembly, part of the 30S ribosomal subunit. Contacts proteins S8 and S17. May interact with IF1 in the 30S initiation complex.

In terms of biological role, with S4 and S5 plays an important role in translational accuracy. Functionally, interacts with and stabilizes bases of the 16S rRNA that are involved in tRNA selection in the A site and with the mRNA backbone. Located at the interface of the 30S and 50S subunits, it traverses the body of the 30S subunit contacting proteins on the other side and probably holding the rRNA structure together. The combined cluster of proteins S8, S12 and S17 appears to hold together the shoulder and platform of the 30S subunit. This Acinetobacter baumannii (strain AB307-0294) protein is Small ribosomal subunit protein uS12.